Consider the following 220-residue polypeptide: Octanoyltransferase (220 aa).

The region spanning Gly-31–Met-211 is the BPL/LPL catalytic domain. Substrate contacts are provided by residues Arg-76–His-83, Ala-143–Gly-145, and Gly-156–Ala-158. Residue Cys-174 is the Acyl-thioester intermediate of the active site.

This sequence belongs to the LipB family.

The protein resides in the cytoplasm. The enzyme catalyses octanoyl-[ACP] + L-lysyl-[protein] = N(6)-octanoyl-L-lysyl-[protein] + holo-[ACP] + H(+). It functions in the pathway protein modification; protein lipoylation via endogenous pathway; protein N(6)-(lipoyl)lysine from octanoyl-[acyl-carrier-protein]: step 1/2. Its function is as follows. Catalyzes the transfer of endogenously produced octanoic acid from octanoyl-acyl-carrier-protein onto the lipoyl domains of lipoate-dependent enzymes. Lipoyl-ACP can also act as a substrate although octanoyl-ACP is likely to be the physiological substrate. The sequence is that of Octanoyltransferase from Solibacter usitatus (strain Ellin6076).